Reading from the N-terminus, the 422-residue chain is Gamma-glutamyl phosphate reductase (422 aa).

Belongs to the gamma-glutamyl phosphate reductase family.

It localises to the cytoplasm. It catalyses the reaction L-glutamate 5-semialdehyde + phosphate + NADP(+) = L-glutamyl 5-phosphate + NADPH + H(+). The protein operates within amino-acid biosynthesis; L-proline biosynthesis; L-glutamate 5-semialdehyde from L-glutamate: step 2/2. Catalyzes the NADPH-dependent reduction of L-glutamate 5-phosphate into L-glutamate 5-semialdehyde and phosphate. The product spontaneously undergoes cyclization to form 1-pyrroline-5-carboxylate. This chain is Gamma-glutamyl phosphate reductase, found in Shewanella piezotolerans (strain WP3 / JCM 13877).